The sequence spans 264 residues: Ribosomal protein L11 methyltransferase (264 aa).

Thr-116, Gly-137, Asp-159, and Asn-200 together coordinate S-adenosyl-L-methionine.

The protein belongs to the methyltransferase superfamily. PrmA family.

Its subcellular location is the cytoplasm. It carries out the reaction L-lysyl-[protein] + 3 S-adenosyl-L-methionine = N(6),N(6),N(6)-trimethyl-L-lysyl-[protein] + 3 S-adenosyl-L-homocysteine + 3 H(+). Its function is as follows. Methylates ribosomal protein L11. The sequence is that of Ribosomal protein L11 methyltransferase from Thermotoga neapolitana (strain ATCC 49049 / DSM 4359 / NBRC 107923 / NS-E).